The chain runs to 291 residues: ATP synthase gamma chain (291 aa).

It belongs to the ATPase gamma chain family. In terms of assembly, F-type ATPases have 2 components, CF(1) - the catalytic core - and CF(0) - the membrane proton channel. CF(1) has five subunits: alpha(3), beta(3), gamma(1), delta(1), epsilon(1). CF(0) has three main subunits: a, b and c.

It is found in the cell inner membrane. Its function is as follows. Produces ATP from ADP in the presence of a proton gradient across the membrane. The gamma chain is believed to be important in regulating ATPase activity and the flow of protons through the CF(0) complex. In Neisseria meningitidis serogroup C (strain 053442), this protein is ATP synthase gamma chain.